A 737-amino-acid polypeptide reads, in one-letter code: Relaxin receptor 2 (737 aa).

Residues 1-399 (MFPLLHFIVL…SSFEDLLANN (399 aa)) are Extracellular-facing. Positions 27–64 (LCQKGYFPCGNLTKCLPRAFHCDGVDDCGNGADEDNCG) constitute an LDL-receptor class A domain. Intrachain disulfides connect Cys28–Cys41, Cys35–Cys54, and Cys48–Cys63. Asn37 is a glycosylation site (N-linked (GlcNAc...) asparagine). Asn121 carries N-linked (GlcNAc...) asparagine glycosylation. LRR repeat units follow at residues 121–142 (NTTLLSLKKNKIHSLPDKVFTK), 145–166 (QLKQIFLQHNCITHISRKAFFG), 169–190 (NLQILYLSHNCITTLRPGVFKD), 193–214 (QLTWLILDDNPITRISQQLFTG), 217–238 (SLFFLSMVNNYLEALPKQMCAQ), 241–262 (QLNWMDLEGNGIKYLTNSSFLS), 265–286 (SLTVLFLPRNQIDFVPEKTFSS), 289–310 (NLGELDLSSNMIMELPPEIFKD), 313–334 (LLQKLNLSSNPLLYLHKNQFES), and 337–358 (QLQSLDLERIEIPNINTRMFQP). N-linked (GlcNAc...) asparagine glycosylation is present at Asn257. Residue Asn318 is glycosylated (N-linked (GlcNAc...) asparagine). The N-linked (GlcNAc...) asparagine glycan is linked to Asn361. Residues 400–420 (ILRIFVWVIAFITCFGNLFVI) form a helical membrane-spanning segment. At 421–438 (GMRSFIKAENTTHATSIK) the chain is on the cytoplasmic side. Residues 439-459 (ILCCADCLMGVYLFFIGFFDI) traverse the membrane as a helical segment. Topologically, residues 460–478 (KYRGQYQKYALLWMESLQC) are extracellular. A disulfide bridge connects residues Cys478 and Cys556. The chain crosses the membrane as a helical span at residues 479-501 (RLMGFLAMLSTEVSVLLLTYLTL). The Cytoplasmic portion of the chain corresponds to 502-520 (EKFLAIVFPFSNIRPGKWQ). Residues 521 to 541 (TMVILICIWIVGFLIAVIPFW) traverse the membrane as a helical segment. The Extracellular portion of the chain corresponds to 542-575 (KEDYFGNFYGKNGVCFPLYYDQTEDIGSKGYSLG). The helical transmembrane segment at 576–596 (IFLGVNLLAFLIIVFSYTIMF) threads the bilayer. The Cytoplasmic portion of the chain corresponds to 597 to 622 (CSIKKTALQTSEVRNPIGREVAVANR). The chain crosses the membrane as a helical span at residues 623 to 643 (FFFIVFSDAICWIPVFVIKIL). The Extracellular portion of the chain corresponds to 644-653 (SLFRVEIPGT). Residues 654–674 (ITSWIVIFFLPVNSALNPILY) traverse the membrane as a helical segment. Residues 675–737 (TLTTSFFKDK…LGDSIVKPIS (63 aa)) are Cytoplasmic-facing.

The protein belongs to the G-protein coupled receptor 1 family.

The protein localises to the cell membrane. In terms of biological role, receptor for relaxin. The activity of this receptor is mediated by G proteins leading to stimulation of adenylate cyclase and an increase of cAMP. May also be a receptor for Leydig insulin-like peptide (INSL3). The polypeptide is Relaxin receptor 2 (RXFP2) (Canis lupus familiaris (Dog)).